The primary structure comprises 904 residues: Phosphoenolpyruvate carboxylase (904 aa).

The segment at 52–71 (ISRRESDAPPSTLSEQLTGR) is disordered. Active-site residues include histidine 151 and lysine 570.

It belongs to the PEPCase type 1 family. It depends on Mg(2+) as a cofactor.

The catalysed reaction is oxaloacetate + phosphate = phosphoenolpyruvate + hydrogencarbonate. In terms of biological role, forms oxaloacetate, a four-carbon dicarboxylic acid source for the tricarboxylic acid cycle. The sequence is that of Phosphoenolpyruvate carboxylase from Xanthomonas oryzae pv. oryzae (strain MAFF 311018).